The primary structure comprises 608 residues: Isoprene synthase, chloroplastic (608 aa).

Residues methionine 1 to isoleucine 45 constitute a chloroplast transit peptide. Position 350 (aspartate 350) interacts with dimethylallyl diphosphate. Mg(2+) is bound by residues aspartate 350 and aspartate 354. Positions aspartate 350–aspartate 354 match the DDXXD motif motif. The dimethylallyl diphosphate site is built by glutamate 428, arginine 494, and asparagine 497. Mg(2+) is bound by residues asparagine 497, threonine 501, and glutamate 505.

Belongs to the terpene synthase family. Tpsb subfamily. Mg(2+) serves as cofactor. It depends on Mn(2+) as a cofactor.

Its subcellular location is the plastid. The protein resides in the chloroplast. It carries out the reaction dimethylallyl diphosphate = isoprene + diphosphate. In terms of biological role, lyase that catalyzes the formation of isoprene from dimethylallyl diphosphate. The polypeptide is Isoprene synthase, chloroplastic (ISPS) (Pueraria montana var. lobata (Kudzu vine)).